Consider the following 555-residue polypeptide: Protein peste (555 aa).

Residues 1–7 (MTSRTRH) lie on the Cytoplasmic side of the membrane. The helical transmembrane segment at 8 to 28 (CARLGIVLLGICCIASGIYLF) threads the bilayer. Topologically, residues 29–434 (RNWIDMFTRM…VRVSEEIAAD (406 aa)) are extracellular. Residues Asn-70, Asn-110, Asn-129, Asn-213, Asn-242, Asn-312, and Asn-342 are each glycosylated (N-linked (GlcNAc...) asparagine). A helical transmembrane segment spans residues 435–455 (IALVPLIVLLGQIVTGILLAG). Residues 456–555 (GLICTCWYPT…SEDSPDVVVR (100 aa)) lie on the Cytoplasmic side of the membrane.

This sequence belongs to the CD36 family.

Its subcellular location is the cell membrane. (Microbial infection) Plays a role in mycobacterial infection. Mediates infection by M.fortuitum and uptake of M.smegmatis. The sequence is that of Protein peste from Drosophila melanogaster (Fruit fly).